A 92-amino-acid polypeptide reads, in one-letter code: Elongation factor 1-beta (92 aa).

The protein belongs to the EF-1-beta/EF-1-delta family.

In terms of biological role, promotes the exchange of GDP for GTP in EF-1-alpha/GDP, thus allowing the regeneration of EF-1-alpha/GTP that could then be used to form the ternary complex EF-1-alpha/GTP/AAtRNA. This chain is Elongation factor 1-beta, found in Pyrobaculum neutrophilum (strain DSM 2338 / JCM 9278 / NBRC 100436 / V24Sta) (Thermoproteus neutrophilus).